The chain runs to 153 residues: Protein ElaA (153 aa).

An N-acetyltransferase domain is found at 7–151 (LHHSELSVSQ…PHIGMAREVI (145 aa)).

The protein belongs to the UPF0039 (ElaA) family.

The sequence is that of Protein ElaA (elaA) from Escherichia coli (strain K12).